Here is a 439-residue protein sequence, read N- to C-terminus: Acyl-coenzyme A thioesterase 10, mitochondrial (439 aa).

The transit peptide at 1–21 (MKRAAMRLWTLNKGLLTHGRG) directs the protein to the mitochondrion. HotDog ACOT-type domains are found at residues 85 to 209 (SYIE…QDSE) and 289 to 401 (EDTK…EKEV).

The protein belongs to the acyl coenzyme A hydrolase family.

It is found in the mitochondrion. Catalyzes the hydrolysis of acyl-CoAs into free fatty acids and coenzyme A (CoASH), regulating their respective intracellular levels. Active on long chain acyl-CoAs. This is Acyl-coenzyme A thioesterase 10, mitochondrial from Mus musculus (Mouse).